The primary structure comprises 319 residues: Peroxidase 62 (319 aa).

Residues 1-22 (MGLVRSFALVIVFLSCLIAVYG) form the signal peptide. Disulfide bonds link cysteine 34/cysteine 110, cysteine 67/cysteine 72, cysteine 116/cysteine 315, and cysteine 195/cysteine 226. Catalysis depends on histidine 65, which acts as the Proton acceptor. Ca(2+)-binding residues include aspartate 66, valine 69, glycine 71, aspartate 73, and serine 75. Proline 157 contacts substrate. Residue histidine 188 coordinates heme b. Residue threonine 189 participates in Ca(2+) binding. Asparagine 204 carries N-linked (GlcNAc...) asparagine glycosylation. Aspartate 239, serine 242, and aspartate 247 together coordinate Ca(2+). An N-linked (GlcNAc...) asparagine glycan is attached at asparagine 253.

The protein belongs to the peroxidase family. Classical plant (class III) peroxidase subfamily. Heme b serves as cofactor. Requires Ca(2+) as cofactor. Mainly expressed in roots.

It localises to the secreted. It carries out the reaction 2 a phenolic donor + H2O2 = 2 a phenolic radical donor + 2 H2O. Removal of H(2)O(2), oxidation of toxic reductants, biosynthesis and degradation of lignin, suberization, auxin catabolism, response to environmental stresses such as wounding, pathogen attack and oxidative stress. These functions might be dependent on each isozyme/isoform in each plant tissue. In Arabidopsis thaliana (Mouse-ear cress), this protein is Peroxidase 62 (PER62).